Reading from the N-terminus, the 182-residue chain is U1 small nuclear ribonucleoprotein C (182 aa).

A Matrin-type zinc finger spans residues 4–36 (YLCDYCQVWLTHDSQSVRKAHNAGRAHIQNVQD). The segment at 129 to 182 (PQTTASSNTQLTQQQQSLPQTNEHQRARTHSNANNHFTKTHHQGQRSHQRFVRA) is disordered. The segment covering 130–150 (QTTASSNTQLTQQQQSLPQTN) has biased composition (low complexity). A compositionally biased stretch (basic residues) spans 166-182 (TKTHHQGQRSHQRFVRA).

Belongs to the U1 small nuclear ribonucleoprotein C family. In terms of assembly, U1 snRNP is composed of the 7 core Sm proteins smb1, smd1, smd2, smd3, sme1, smf1 and smg1 (Sm proteins B, D1, D2, D3, E, F and G, respectively) that assemble in a heptameric protein ring on the Sm site of the small nuclear RNA to form the core snRNP, and at least 9 U1 snRNP-specific proteins usp101/U1-70K, usp102/U1-A, usp103/U1-C, usp106/LUC7, usp105/PRP39, usp104/PRP40, usp107/U1-H, usp108/U1-J and usp109/U1-L. usp103/U1-C interacts with U1 snRNA and the 5' splice-site region of the pre-mRNA.

Its subcellular location is the nucleus. In terms of biological role, component of the spliceosomal U1 snRNP, which is essential for recognition of the pre-mRNA 5' splice-site and the subsequent assembly of the spliceosome. usp103/U1-C is directly involved in initial 5' splice-site recognition for both constitutive and regulated alternative splicing. The interaction with the 5' splice-site seems to precede base-pairing between the pre-mRNA and the U1 snRNA. Stimulates commitment or early (E) complex formation by stabilizing the base pairing of the 5' end of the U1 snRNA and the 5' splice-site region. The chain is U1 small nuclear ribonucleoprotein C (usp103) from Schizosaccharomyces pombe (strain 972 / ATCC 24843) (Fission yeast).